Here is a 665-residue protein sequence, read N- to C-terminus: MLRERTVRLQYGSRVEAVYVLGTQLWTDVYSAAPAGAKTFSLKHSEGVKVEVVRDGEAEEVVTNGKQRWALSPSTTLRLSMAQASTEASSDKVTVNYYEEDGSAPIDQAGLFLTAIEISLDVDADRDGEVEKNNPKKASWTWGPEGQGAILLVNCDRDTPWLPKEDCSDEKVYSKQDLQDMSQMILRTKGPDRLPAGYEIVLYISMSDSDKVGVFYVENPFFGQRYIHILGRQKLYHVVKYTGGSAELLFFVEGLRFPDESFSGLVSIHVSLLEYMAEDIPLTPIFTDTVTFRIAPWIMTPNILPPVSVFVCCMKDNYLFLKEVKNLVEKTNCELKVCFQYMNRGDRWIQDEIEFGYIEAPHKGFPVVLDSPRDGNLKDFPIKQLLGPDFGYVTREPLFETVTSLDSFGNLEVSPPVTVNGKAYPLGRILIGSSFPLSGGRRMTKVVRDFLQAQQVQAPVELYSDWLTVGHVDEFMTFVPIPGKKEFRLLMASTSACYQLFREKQKEGHGEAIMFKGLGGMSSKRITINKILSNESLTQENQYFQRCLDWNRDILKKELALTEKDIIDLPALFKMDEDRQARAFFPNMVNMIVLDKDLGIPKPFGPQVEEECCLETHVRGLLEPLGLACTFIDDISAYHKFLGEVHCGTNVRRKPFTFKWWHMVP.

17 residues coordinate Ca(2+): Asp-123, Asp-125, Asp-127, Glu-131, Asn-154, Asp-156, Asp-158, Asp-166, Asp-169, Lys-171, Asp-177, Asp-180, Glu-354, Asp-389, Phe-408, Leu-411, and Glu-412. Cys-647 functions as the Nucleophile in the catalytic mechanism.

Belongs to the protein arginine deiminase family. In terms of assembly, homodimer. Requires Ca(2+) as cofactor. In terms of tissue distribution, spinal cord, submaxillary gland, cerebrum, cerebellum, and skeletal muscle.

Its subcellular location is the cytoplasm. The catalysed reaction is L-arginyl-[protein] + H2O = L-citrullyl-[protein] + NH4(+). Functionally, catalyzes the deimination of arginine residues of proteins. The chain is Protein-arginine deiminase type-2 (Padi2) from Rattus norvegicus (Rat).